The chain runs to 487 residues: ATP synthase subunit beta, plastid (487 aa).

ATP is bound at residue 169 to 176 (GGAGVGKT).

The protein belongs to the ATPase alpha/beta chains family. As to quaternary structure, F-type ATPases have 2 components, CF(1) - the catalytic core - and CF(0) - the membrane proton channel. CF(1) has five subunits: alpha(3), beta(3), gamma(1), delta(1), epsilon(1). CF(0) has four main subunits: a(1), b(1), b'(1) and c(9-12).

Its subcellular location is the plastid membrane. The catalysed reaction is ATP + H2O + 4 H(+)(in) = ADP + phosphate + 5 H(+)(out). Produces ATP from ADP in the presence of a proton gradient across the membrane. The catalytic sites are hosted primarily by the beta subunits. The sequence is that of ATP synthase subunit beta, plastid (atpB) from Cuscuta pentagona (Five-angled dodder).